A 192-amino-acid chain; its full sequence is Signal peptidase complex catalytic subunit sec11 (192 aa).

At 1–18 (MLSFLSSNLSNTRQSIAQ) the chain is on the cytoplasmic side. A helical; Signal-anchor for type II membrane protein transmembrane segment spans residues 19 to 39 (VLNFALVLSTAFMLWKGLSVV). Topologically, residues 40–192 (TASSSPIVVV…MGLMVILQRE (153 aa)) are lumenal. Residues Ser53, His92, and Asp134 each act as charge relay system in the active site. The C-terminal short (CTS) helix stretch occupies residues 178–189 (VLLGIMGLMVIL).

This sequence belongs to the peptidase S26B family. Component of the signal peptidase complex (SPC) composed of a catalytic subunit SEC11 and three accessory subunits SPC1, SPC2 and SPC3. The complex induces a local thinning of the ER membrane which is used to measure the length of the signal peptide (SP) h-region of protein substrates. This ensures the selectivity of the complex towards h-regions shorter than 18-20 amino acids. SPC associates with the translocon complex.

Its subcellular location is the endoplasmic reticulum membrane. The catalysed reaction is Cleavage of hydrophobic, N-terminal signal or leader sequences from secreted and periplasmic proteins.. In terms of biological role, catalytic component of the signal peptidase complex (SPC) which catalyzes the cleavage of N-terminal signal sequences from nascent proteins as they are translocated into the lumen of the endoplasmic reticulum. Specifically cleaves N-terminal signal peptides that contain a hydrophobic alpha-helix (h-region) shorter than 18-20 amino acids. This is Signal peptidase complex catalytic subunit sec11 (sec11) from Emericella nidulans (strain FGSC A4 / ATCC 38163 / CBS 112.46 / NRRL 194 / M139) (Aspergillus nidulans).